Here is a 156-residue protein sequence, read N- to C-terminus: ATP synthase subunit b (156 aa).

The chain crosses the membrane as a helical span at residues 7–27; that stretch reads LVAQMVVFFILWWVVAKFIWP.

It belongs to the ATPase B chain family. F-type ATPases have 2 components, F(1) - the catalytic core - and F(0) - the membrane proton channel. F(1) has five subunits: alpha(3), beta(3), gamma(1), delta(1), epsilon(1). F(0) has three main subunits: a(1), b(2) and c(10-14). The alpha and beta chains form an alternating ring which encloses part of the gamma chain. F(1) is attached to F(0) by a central stalk formed by the gamma and epsilon chains, while a peripheral stalk is formed by the delta and b chains.

The protein localises to the cell inner membrane. Functionally, f(1)F(0) ATP synthase produces ATP from ADP in the presence of a proton or sodium gradient. F-type ATPases consist of two structural domains, F(1) containing the extramembraneous catalytic core and F(0) containing the membrane proton channel, linked together by a central stalk and a peripheral stalk. During catalysis, ATP synthesis in the catalytic domain of F(1) is coupled via a rotary mechanism of the central stalk subunits to proton translocation. Its function is as follows. Component of the F(0) channel, it forms part of the peripheral stalk, linking F(1) to F(0). The protein is ATP synthase subunit b of Ralstonia pickettii (strain 12J).